We begin with the raw amino-acid sequence, 158 residues long: Small ribosomal subunit protein uS7 (158 aa).

Belongs to the universal ribosomal protein uS7 family. In terms of assembly, part of the 30S ribosomal subunit. Contacts proteins S9 and S11.

Its function is as follows. One of the primary rRNA binding proteins, it binds directly to 16S rRNA where it nucleates assembly of the head domain of the 30S subunit. Is located at the subunit interface close to the decoding center, probably blocks exit of the E-site tRNA. The protein is Small ribosomal subunit protein uS7 of Flavobacterium psychrophilum (strain ATCC 49511 / DSM 21280 / CIP 103535 / JIP02/86).